The primary structure comprises 144 residues: Transcriptional regulator MraZ (144 aa).

2 SpoVT-AbrB domains span residues 4 to 47 (EYKN…TADK) and 77 to 120 (AQEI…DLKQ).

The protein belongs to the MraZ family. In terms of assembly, forms oligomers.

The protein localises to the cytoplasm. It localises to the nucleoid. The chain is Transcriptional regulator MraZ from Treponema denticola (strain ATCC 35405 / DSM 14222 / CIP 103919 / JCM 8153 / KCTC 15104).